Consider the following 85-residue polypeptide: MAQKKGGGSTRNGRDSQPKMLGVKAYGGQMVSAGSIIVRQRGTRFHAGTNVGMGRDHTLFALVDGTISFDVKGASNRKTVFVTPV.

Positions 1 to 10 are enriched in gly residues; sequence MAQKKGGGST. Residues 1–21 are disordered; it reads MAQKKGGGSTRNGRDSQPKML.

It belongs to the bacterial ribosomal protein bL27 family.

The protein is Large ribosomal subunit protein bL27 of Leptothrix cholodnii (strain ATCC 51168 / LMG 8142 / SP-6) (Leptothrix discophora (strain SP-6)).